We begin with the raw amino-acid sequence, 393 residues long: NAD(P)H-quinone oxidoreductase subunit H, chloroplastic (393 aa).

Belongs to the complex I 49 kDa subunit family. In terms of assembly, NDH is composed of at least 16 different subunits, 5 of which are encoded in the nucleus.

It localises to the plastid. The protein resides in the chloroplast thylakoid membrane. It carries out the reaction a plastoquinone + NADH + (n+1) H(+)(in) = a plastoquinol + NAD(+) + n H(+)(out). The enzyme catalyses a plastoquinone + NADPH + (n+1) H(+)(in) = a plastoquinol + NADP(+) + n H(+)(out). In terms of biological role, NDH shuttles electrons from NAD(P)H:plastoquinone, via FMN and iron-sulfur (Fe-S) centers, to quinones in the photosynthetic chain and possibly in a chloroplast respiratory chain. The immediate electron acceptor for the enzyme in this species is believed to be plastoquinone. Couples the redox reaction to proton translocation, and thus conserves the redox energy in a proton gradient. This Pelargonium hortorum (Common geranium) protein is NAD(P)H-quinone oxidoreductase subunit H, chloroplastic.